The primary structure comprises 339 residues: Ketol-acid reductoisomerase (NADP(+)) (339 aa).

Residues 1-182 form the KARI N-terminal Rossmann domain; that stretch reads MRVYYDRDAD…GGGRSGIIET (182 aa). NADP(+)-binding positions include 24 to 27, Lys48, Ser51, Thr53, and 83 to 86; these read YGSQ and DELQ. His108 is a catalytic residue. Gly134 contacts NADP(+). Positions 183 to 328 constitute a KARI C-terminal knotted domain; it reads NFKEECETDL…AKLRAMMPWI (146 aa). Asp191, Glu195, Glu227, and Glu231 together coordinate Mg(2+). Position 252 (Ser252) interacts with substrate.

This sequence belongs to the ketol-acid reductoisomerase family. The cofactor is Mg(2+).

It carries out the reaction (2R)-2,3-dihydroxy-3-methylbutanoate + NADP(+) = (2S)-2-acetolactate + NADPH + H(+). The enzyme catalyses (2R,3R)-2,3-dihydroxy-3-methylpentanoate + NADP(+) = (S)-2-ethyl-2-hydroxy-3-oxobutanoate + NADPH + H(+). It participates in amino-acid biosynthesis; L-isoleucine biosynthesis; L-isoleucine from 2-oxobutanoate: step 2/4. Its pathway is amino-acid biosynthesis; L-valine biosynthesis; L-valine from pyruvate: step 2/4. Functionally, involved in the biosynthesis of branched-chain amino acids (BCAA). Catalyzes an alkyl-migration followed by a ketol-acid reduction of (S)-2-acetolactate (S2AL) to yield (R)-2,3-dihydroxy-isovalerate. In the isomerase reaction, S2AL is rearranged via a Mg-dependent methyl migration to produce 3-hydroxy-3-methyl-2-ketobutyrate (HMKB). In the reductase reaction, this 2-ketoacid undergoes a metal-dependent reduction by NADPH to yield (R)-2,3-dihydroxy-isovalerate. This chain is Ketol-acid reductoisomerase (NADP(+)), found in Rhizobium meliloti (strain 1021) (Ensifer meliloti).